The chain runs to 236 residues: Small ribosomal subunit protein uS3 (236 aa).

The KH type-2 domain maps to 39–107 (IREILHKELK…DVVINIVEIR (69 aa)). The interval 213 to 236 (MAQDKRMNEGGGESSQPRSRRDAA) is disordered.

It belongs to the universal ribosomal protein uS3 family. In terms of assembly, part of the 30S ribosomal subunit. Forms a tight complex with proteins S10 and S14.

Its function is as follows. Binds the lower part of the 30S subunit head. Binds mRNA in the 70S ribosome, positioning it for translation. The protein is Small ribosomal subunit protein uS3 of Bradyrhizobium sp. (strain BTAi1 / ATCC BAA-1182).